Reading from the N-terminus, the 1714-residue chain is Bifunctional glutamate/proline--tRNA ligase (1714 aa).

A disordered region spans residues 166-191 (DAKVKRSPQSSKEQTPAKTGERKQEG). Positions 170-754 (KRSPQSSKEQ…ASELDSQISQ (585 aa)) are glutamate--tRNA ligase. A compositionally biased stretch (polar residues) spans 172–182 (SPQSSKEQTPA). Residues 209–220 (PPEASGYLHIGH) carry the 'HIGH' region motif. A 'KMSKS' region motif is present at residues 438 to 442 (VLSKR). Disordered regions lie at residues 718–754 (PTSGLKVNAPDAKATKKASSPVSSSGQASELDSQISQ), 791–817 (GKDWKPGQTSASSAPVPAASSSSANDA), and 943–962 (GTTAPAPAAAPVKVKQEKNP). 2 stretches are compositionally biased toward low complexity: residues 734–746 (KASSPVSSSGQAS) and 800–817 (SASSAPVPAASSSSANDA). WHEP-TRS domains are found at residues 744–800 (QASE…GQTS), 816–872 (DAVS…GTVP), 890–946 (SVAQ…GTTA), 969–1025 (TVNT…GTVA), and 1044–1100 (DVGS…DAKS). The 6 X 57 AA approximate repeats stretch occupies residues 755-1201 (QGDLVRDLKS…KPAKPVKKEP (447 aa)). 2 disordered regions span residues 1093–1119 (DWTPDAKSEPAVVKKEASPVSMASPAK) and 1168–1210 (FPVA…GAVK). Over residues 1094–1109 (WTPDAKSEPAVVKKEA) the composition is skewed to basic and acidic residues. At Ser-1110 the chain carries Phosphoserine. The region spanning 1118–1174 (AKDELTQEINAQGEKVRAAKGNKAAKEVIDAEVAKLLALKAKYKEVTGTDFPVAGRG) is the WHEP-TRS 6 domain. Over residues 1172–1181 (GRGGGGGGGS) the composition is skewed to gly residues. Residues 1207–1714 (GAVKKQTRLG…KFYTLFGRSY (508 aa)) form a proline--tRNA ligase region. L-proline is bound by residues 1322–1324 (TSE) and Arg-1353. ATP contacts are provided by Arg-1353, Glu-1355, Arg-1364, Thr-1365, Gln-1438, and Thr-1441. Gln-1438 is a Mg(2+) binding site. Residue His-1443 coordinates L-proline. Residues Thr-1476 and Arg-1478 each contribute to the ATP site. The Zn(2+) site is built by Cys-1648, Cys-1653, and Cys-1695.

It in the N-terminal section; belongs to the class-I aminoacyl-tRNA synthetase family. Glutamate--tRNA ligase type 2 subfamily. The protein in the C-terminal section; belongs to the class-II aminoacyl-tRNA synthetase family. As to quaternary structure, component of the multisynthetase complex which is comprised of a bifunctional glutamyl-prolyl-tRNA synthetase, the monospecific isoleucyl, leucyl, glutaminyl, methionyl, lysyl, arginyl, and aspartyl-tRNA synthetases as well as three auxiliary proteins, p18, p48 and p43.

It catalyses the reaction tRNA(Glu) + L-glutamate + ATP = L-glutamyl-tRNA(Glu) + AMP + diphosphate. The catalysed reaction is tRNA(Pro) + L-proline + ATP = L-prolyl-tRNA(Pro) + AMP + diphosphate. Catalyzes the attachment of both L-glutamate and L-proline to their cognate tRNAs in a two-step reaction where the amino acid is first activated by ATP to form a covalent intermediate with AMP. Subsequently, the activated amino acid is transferred to the acceptor end of the cognate tRNA to form L-glutamyl-tRNA(Glu) and L-prolyl-tRNA(Pro). The protein is Bifunctional glutamate/proline--tRNA ligase of Drosophila melanogaster (Fruit fly).